A 786-amino-acid polypeptide reads, in one-letter code: Receptor-like protein 30 (786 aa).

A signal peptide spans 1-30; the sequence is MIPSQSNSFSGSVITLYFFLLGSLVLRTLA. The Extracellular portion of the chain corresponds to 31–739; sequence SSRLHYCRHD…SEPEEQVINW (709 aa). 4 N-linked (GlcNAc...) asparagine glycosylation sites follow: Asn-67, Asn-98, Asn-115, and Asn-133. 4 LRR repeats span residues 110 to 133, 134 to 158, 159 to 181, and 183 to 204; these read LQQLQNLTLSDCHLYGEVTSSLGN, LSRLTHLDLSSNQLTGEVLASVSKL, NQLRDLLLSENSFSGNIPTSFTN, and TKLSSLDISSNQFTLENFSFIL. Asn-181, Asn-199, and Asn-206 each carry an N-linked (GlcNAc...) asparagine glycan. LRR repeat units follow at residues 207–231, 233–255, 257–279, 280–304, 305–328, 329–352, 354–375, 376–399, 400–423, 425–447, 448–472, 474–496, 497–524, and 526–546; these read LTSLSSLNVASNHFKSTLPSDMSGL, NLKYFDVRENSFVGTFPTSLFTI, SLQIVYLEGNQFMGPIKFGNISS, SSRLWDLNLADNKFDGPIPEYISEI, HSLIVLDLSHNNLVGPIPTSISKL, VNLQHLSLSNNTLEGEVPGCLWGL, TVTLSHNSFNSFGKSSSGALDG, ESMQELDLGSNSLGGPFPHWICKQ, RFLKYLDLSNNLFNGSIPPCLKNS, YWLKGLVLRNNSFSGFLPDVFVN, ASMLLSLDVSYNRLEGKLPKSLINC, GMELLNVGSNIIKDTFPSWLVSL, PSLRVLILRSNAFYGSLYYDHISFGFQH, and RLIDISQNGFSGTLSPLYFSN. The N-linked (GlcNAc...) asparagine glycan is linked to Asn-276. Asn-338 carries an N-linked (GlcNAc...) asparagine glycan. N-linked (GlcNAc...) asparagine glycosylation is found at Asn-413, Asn-422, Asn-434, Asn-447, and Asn-471. Asn-558 carries an N-linked (GlcNAc...) asparagine glycan. LRR repeat units lie at residues 596 to 621, 622 to 645, 646 to 669, and 671 to 694; these read IPYFFRAIDFSGNRFFGNIPESVGLL, KELRLLNLSGNSFTSNIPQSLANL, TNLETLDLSRNQLSGHIPRDLGSL, and FLSTMNFSHNLLEGPVPLGTQFQS. N-linked (GlcNAc...) asparagine glycans are attached at residues Asn-628 and Asn-644. Asn-676 carries an N-linked (GlcNAc...) asparagine glycan. The helical transmembrane segment at 740–760 threads the bilayer; that stretch reads IAAAIAYGPGVFCGLVIGHIF. At 761 to 786 the chain is on the cytoplasmic side; that stretch reads FTAHKHEWFMEKFHRNKRRVVTTSAR.

Belongs to the RLP family.

The protein resides in the cell membrane. Receptor for microbe-associated molecular patterns (MAMPs) that induces a BAK1-dependent basal immune response to necrotrophic fungi (e.g. S.sclerotiorum) in the presence of MAMPs (e.g. flg22 and SCLEROTINIA CULTURE FILTRATE ELICITOR1 (SCFE1) from the necrotrophic fungal pathogen S.sclerotiorum). Functionality seems to depend on the presence of the receptor kinase SOBIR1 as an adapter protein. Required for full non-host resistance to bacterial pathogens (e.g. P.syringae pv phaseolicola). This Arabidopsis thaliana (Mouse-ear cress) protein is Receptor-like protein 30.